A 223-amino-acid chain; its full sequence is Uracil-DNA glycosylase (223 aa).

Residue Asp61 is the Proton acceptor of the active site.

This sequence belongs to the uracil-DNA glycosylase (UDG) superfamily. UNG family.

It localises to the cytoplasm. The catalysed reaction is Hydrolyzes single-stranded DNA or mismatched double-stranded DNA and polynucleotides, releasing free uracil.. Functionally, excises uracil residues from the DNA which can arise as a result of misincorporation of dUMP residues by DNA polymerase or due to deamination of cytosine. This chain is Uracil-DNA glycosylase, found in Haemophilus ducreyi (strain 35000HP / ATCC 700724).